The primary structure comprises 404 residues: Beta-ketoacyl-[acyl-carrier-protein] synthase III, chloroplastic (404 aa).

The N-terminal 43 residues, 1–43, are a transit peptide targeting the chloroplast; the sequence is MANASGFFTHPSIPNLRSRIHVPVRVSGSGFCVSNRFSKRVLC. Active-site residues include Cys179, His330, and Asn360.

Belongs to the thiolase-like superfamily. FabH family.

The protein localises to the plastid. It is found in the chloroplast. It carries out the reaction malonyl-[ACP] + acetyl-CoA + H(+) = 3-oxobutanoyl-[ACP] + CO2 + CoA. It participates in lipid metabolism; fatty acid biosynthesis. Functionally, catalyzes the condensation reaction of fatty acid synthesis by the addition to an acyl acceptor of two carbons from malonyl-ACP. KAS III catalyzes the first condensation reaction which initiates fatty acid synthesis and may therefore play a role in governing the total rate of fatty acid production. Possesses both acetoacetyl-ACP synthase and acetyl transacylase activities. This is Beta-ketoacyl-[acyl-carrier-protein] synthase III, chloroplastic from Arabidopsis thaliana (Mouse-ear cress).